We begin with the raw amino-acid sequence, 352 residues long: Lipid storage droplets surface-binding protein 2 (352 aa).

2 disordered regions span residues 1-28 (MASAEQKHATGNGTTGNGTAMNDVDQPK) and 298-352 (NVEQ…VSSQ). The segment covering 298-309 (NVEQSGGSSSDA) has biased composition (polar residues). Residues 315 to 329 (TTTSTTTTTTTSSTS) show a composition bias toward low complexity.

This sequence belongs to the perilipin family. Ubiquitous expression in early embryos. At stage 5 expression is restricted to the pole cells. At stage 11 expression is seen in the amnioserosa, refined to the fat body and midgut by stage 14. Also seen in the hindgut by the end of embryogenesis. Expression is seen in larval fat body (at protein level).

It localises to the cytoplasm. Its subcellular location is the lipid droplet. Functionally, essential for embryogenesis. Required for normal deposition of neutral lipids in the oocyte. The protein is Lipid storage droplets surface-binding protein 2 of Drosophila melanogaster (Fruit fly).